A 1457-amino-acid polypeptide reads, in one-letter code: NBPF family member NBPF12 (1457 aa).

Positions 75–119 form a coiled coil; sequence RQFKEEKLAEQLKQAEELRQYKVLVHSQERELTQLREKLREGRDA. The disordered stretch occupies residues 162–200; it reads LSPENDEDEDEDVQVEEDEKVLESSAPREVQKAEESKVP. A compositionally biased stretch (acidic residues) spans 165–181; it reads ENDEDEDEDVQVEEDEK. Residues 165-259 enclose the Olduvai 1 domain; it reads ENDEDEDEDV…ECQDALNILP (95 aa). Residues 190–200 show a composition bias toward basic and acidic residues; it reads EVQKAEESKVP. Positions 339–390 form a coiled coil; sequence KSMLRNELQFKEEKLAEQLKQAEELRQYKVLVHSQERELTQLREKLREGRDA. The disordered stretch occupies residues 432-472; it reads KLSPENDEDEDEDVQVEEDEKVLESSSPREMQKAEESKVPE. The span at 436 to 452 shows a compositional bias: acidic residues; it reads ENDEDEDEDVQVEEDEK. The region spanning 436-530 is the Olduvai 2 domain; sequence ENDEDEDEDV…ECQDALNILP (95 aa). Over residues 461–472 the composition is skewed to basic and acidic residues; it reads EMQKAEESKVPE. Positions 610-661 form a coiled coil; it reads KSMLRNELQFKEEKLAEQLKQAEELRQYKVLVHSQERELTQLREKLREGRDA. Olduvai domains lie at 707 to 799, 800 to 871, 872 to 963, 966 to 1021, 1022 to 1114, 1115 to 1207, 1210 to 1265, 1266 to 1358, and 1359 to 1457; these read ENDN…HIIP, ENES…VDIG, RHRW…PSCP, SREL…LDVD, RIKK…RSKK, KRRR…PSCP, and KRRR…IFPQ. 2 disordered regions span residues 721–746 and 791–838; these read AEKV…EDSL and WEDA…GYST. Composition is skewed to acidic residues over residues 801-810 and 821-833; these read NESDDEEEEE and ESEE…ESWD. A disordered region spans residues 1100–1139; sequence KKGKGKKRRGRRSKKKRRRGRKEGEEDQNPPCPRLSRELL. Over residues 1102–1120 the composition is skewed to basic residues; it reads GKGKKRRGRRSKKKRRRGR. The interval 1344-1378 is disordered; that stretch reads KKGKGKKRRGRRSKKKRRRGRKEGEEDQNPPCPRL. The span at 1346–1364 shows a compositional bias: basic residues; sequence GKGKKRRGRRSKKKRRRGR.

This sequence belongs to the NBPF family. Widely expressed with highest levels in brain, ovary, mammary gland, skin and adipose tissue. Also expressed in testis. Detected in a number of tumors including osteosarcoma, mammary carcinoma and hepatocellular carcinoma.

It localises to the cytoplasm. This is NBPF family member NBPF12 from Homo sapiens (Human).